The primary structure comprises 480 residues: Ribulose bisphosphate carboxylase large chain (480 aa).

The propeptide occupies 1–2 (MS). Pro-3 bears the N-acetylproline mark. Position 14 is an N6,N6,N6-trimethyllysine (Lys-14). Asn-123 and Thr-173 together coordinate substrate. Residue Lys-175 is the Proton acceptor of the active site. Lys-177 contributes to the substrate binding site. Residues Lys-201, Asp-203, and Glu-204 each contribute to the Mg(2+) site. At Lys-201 the chain carries N6-carboxylysine. His-294 functions as the Proton acceptor in the catalytic mechanism. Residues Arg-295, His-327, and Ser-379 each contribute to the substrate site.

Belongs to the RuBisCO large chain family. Type I subfamily. Heterohexadecamer of 8 large chains and 8 small chains; disulfide-linked. The disulfide link is formed within the large subunit homodimers. It depends on Mg(2+) as a cofactor. Post-translationally, the disulfide bond which can form in the large chain dimeric partners within the hexadecamer appears to be associated with oxidative stress and protein turnover.

It localises to the plastid. The protein localises to the chloroplast. It carries out the reaction 2 (2R)-3-phosphoglycerate + 2 H(+) = D-ribulose 1,5-bisphosphate + CO2 + H2O. The catalysed reaction is D-ribulose 1,5-bisphosphate + O2 = 2-phosphoglycolate + (2R)-3-phosphoglycerate + 2 H(+). Functionally, ruBisCO catalyzes two reactions: the carboxylation of D-ribulose 1,5-bisphosphate, the primary event in carbon dioxide fixation, as well as the oxidative fragmentation of the pentose substrate in the photorespiration process. Both reactions occur simultaneously and in competition at the same active site. The protein is Ribulose bisphosphate carboxylase large chain of Basella alba (Malabar spinach).